A 130-amino-acid chain; its full sequence is Large ribosomal subunit protein bL19 (130 aa).

This sequence belongs to the bacterial ribosomal protein bL19 family.

Functionally, this protein is located at the 30S-50S ribosomal subunit interface and may play a role in the structure and function of the aminoacyl-tRNA binding site. This Psychrobacter arcticus (strain DSM 17307 / VKM B-2377 / 273-4) protein is Large ribosomal subunit protein bL19.